Consider the following 496-residue polypeptide: Angiopoietin-2 (496 aa).

The signal sequence occupies residues 1 to 18 (MWQLVFFALSCDLVLAAA). N-linked (GlcNAc...) asparagine glycans are attached at residues asparagine 89, asparagine 119, asparagine 133, asparagine 151, asparagine 240, and asparagine 304. A coiled-coil region spans residues 130 to 255 (NLLNQTAEQT…KQQHDLMETV (126 aa)). The region spanning 275 to 495 (KEEQIIFRDC…ATTMMIRPAD (221 aa)) is the Fibrinogen C-terminal domain. Residues cysteine 284 and cysteine 313 are joined by a disulfide bond. Ca(2+) contacts are provided by aspartate 429, aspartate 431, cysteine 433, and cysteine 435. Disulfide bonds link cysteine 433-cysteine 435 and cysteine 437-cysteine 450.

Interacts with TEK/TIE2, competing for the same binding site as ANGPT1. Interacts with ITGA5. Interacts with SVEP1/polydom. Interacts with THBD; this interaction significantly inhibits the generation of activated PC and TAFIa/CPB2 by the thrombin/thrombomodulin complex.

Its subcellular location is the secreted. Its function is as follows. Binds to TEK/TIE2, competing for the ANGPT1 binding site, and modulating ANGPT1 signaling. Can induce tyrosine phosphorylation of TEK/TIE2 in the absence of ANGPT1. In the absence of angiogenic inducers, such as VEGF, ANGPT2-mediated loosening of cell-matrix contacts may induce endothelial cell apoptosis with consequent vascular regression. In concert with VEGF, it may facilitate endothelial cell migration and proliferation, thus serving as a permissive angiogenic signal. Involved in the regulation of lymphangiogenesis. The polypeptide is Angiopoietin-2 (ANGPT2) (Sus scrofa (Pig)).